Consider the following 141-residue polypeptide: D-aminoacyl-tRNA deacylase (141 aa).

The short motif at 133 to 134 (GP) is the Gly-cisPro motif, important for rejection of L-amino acids element.

It belongs to the DTD family. As to quaternary structure, homodimer.

Its subcellular location is the cytoplasm. The catalysed reaction is glycyl-tRNA(Ala) + H2O = tRNA(Ala) + glycine + H(+). It catalyses the reaction a D-aminoacyl-tRNA + H2O = a tRNA + a D-alpha-amino acid + H(+). An aminoacyl-tRNA editing enzyme that deacylates mischarged D-aminoacyl-tRNAs. Also deacylates mischarged glycyl-tRNA(Ala), protecting cells against glycine mischarging by AlaRS. Acts via tRNA-based rather than protein-based catalysis; rejects L-amino acids rather than detecting D-amino acids in the active site. By recycling D-aminoacyl-tRNA to D-amino acids and free tRNA molecules, this enzyme counteracts the toxicity associated with the formation of D-aminoacyl-tRNA entities in vivo and helps enforce protein L-homochirality. The polypeptide is D-aminoacyl-tRNA deacylase (Streptomyces coelicolor (strain ATCC BAA-471 / A3(2) / M145)).